A 368-amino-acid chain; its full sequence is Leu/Ile/Val-binding protein homolog 3 (368 aa).

An N-terminal signal peptide occupies residues 1 to 23 (MNLKLLSSVAFAATIGFASAAYA).

Belongs to the leucine-binding protein family.

Its function is as follows. Component of an amino-acid transport system. This is Leu/Ile/Val-binding protein homolog 3 from Brucella melitensis biotype 1 (strain ATCC 23456 / CCUG 17765 / NCTC 10094 / 16M).